We begin with the raw amino-acid sequence, 254 residues long: Thiazole synthase (254 aa).

Residue Lys95 is the Schiff-base intermediate with DXP of the active site. 1-deoxy-D-xylulose 5-phosphate is bound by residues Gly156, Ala182–Gly183, and Asn204–Thr205.

The protein belongs to the ThiG family. In terms of assembly, homotetramer. Forms heterodimers with either ThiH or ThiS.

It localises to the cytoplasm. It carries out the reaction [ThiS sulfur-carrier protein]-C-terminal-Gly-aminoethanethioate + 2-iminoacetate + 1-deoxy-D-xylulose 5-phosphate = [ThiS sulfur-carrier protein]-C-terminal Gly-Gly + 2-[(2R,5Z)-2-carboxy-4-methylthiazol-5(2H)-ylidene]ethyl phosphate + 2 H2O + H(+). It participates in cofactor biosynthesis; thiamine diphosphate biosynthesis. In terms of biological role, catalyzes the rearrangement of 1-deoxy-D-xylulose 5-phosphate (DXP) to produce the thiazole phosphate moiety of thiamine. Sulfur is provided by the thiocarboxylate moiety of the carrier protein ThiS. In vitro, sulfur can be provided by H(2)S. This chain is Thiazole synthase, found in Shewanella putrefaciens (strain CN-32 / ATCC BAA-453).